The primary structure comprises 454 residues: UPF0210 protein Mlab_1030 (454 aa).

Belongs to the UPF0210 family.

The polypeptide is UPF0210 protein Mlab_1030 (Methanocorpusculum labreanum (strain ATCC 43576 / DSM 4855 / Z)).